A 478-amino-acid chain; its full sequence is NADH-quinone oxidoreductase subunit N (478 aa).

Transmembrane regions (helical) follow at residues 7-27 (SFIP…LLIA), 46-66 (ILLV…VLTF), 74-94 (AFGD…FLFS), 109-129 (FTLG…YNLI), 163-183 (FVLG…IYGA), 204-224 (VVLS…LGAV), 237-257 (APTA…FAML), 273-293 (QSLI…ITLV), 300-320 (LLAY…IAAN), 328-348 (MFYT…IVAL), 371-391 (LALM…FVGF), 405-425 (GFTW…FYYL), and 451-471 (WAVS…SSLI).

The protein belongs to the complex I subunit 2 family. As to quaternary structure, NDH-1 is composed of 14 different subunits. Subunits NuoA, H, J, K, L, M, N constitute the membrane sector of the complex.

It localises to the cell inner membrane. The enzyme catalyses a quinone + NADH + 5 H(+)(in) = a quinol + NAD(+) + 4 H(+)(out). Functionally, NDH-1 shuttles electrons from NADH, via FMN and iron-sulfur (Fe-S) centers, to quinones in the respiratory chain. The immediate electron acceptor for the enzyme in this species is believed to be ubiquinone. Couples the redox reaction to proton translocation (for every two electrons transferred, four hydrogen ions are translocated across the cytoplasmic membrane), and thus conserves the redox energy in a proton gradient. The sequence is that of NADH-quinone oxidoreductase subunit N from Hydrogenovibrio crunogenus (strain DSM 25203 / XCL-2) (Thiomicrospira crunogena).